The sequence spans 124 residues: S-adenosylmethionine decarboxylase proenzyme (124 aa).

S70 (schiff-base intermediate with substrate; via pyruvic acid) is an active-site residue. At S70 the chain carries Pyruvic acid (Ser); by autocatalysis. The Proton acceptor; for processing activity role is filled by H75. C90 (proton donor; for catalytic activity) is an active-site residue.

This sequence belongs to the prokaryotic AdoMetDC family. Type 1 subfamily. In terms of assembly, heterotetramer of two alpha and two beta chains arranged as a dimer of alpha/beta heterodimers. Pyruvate is required as a cofactor. Is synthesized initially as an inactive proenzyme. Formation of the active enzyme involves a self-maturation process in which the active site pyruvoyl group is generated from an internal serine residue via an autocatalytic post-translational modification. Two non-identical subunits are generated from the proenzyme in this reaction, and the pyruvate is formed at the N-terminus of the alpha chain, which is derived from the carboxyl end of the proenzyme. The post-translation cleavage follows an unusual pathway, termed non-hydrolytic serinolysis, in which the side chain hydroxyl group of the serine supplies its oxygen atom to form the C-terminus of the beta chain, while the remainder of the serine residue undergoes an oxidative deamination to produce ammonia and the pyruvoyl group blocking the N-terminus of the alpha chain.

The catalysed reaction is S-adenosyl-L-methionine + H(+) = S-adenosyl 3-(methylsulfanyl)propylamine + CO2. It participates in amine and polyamine biosynthesis; S-adenosylmethioninamine biosynthesis; S-adenosylmethioninamine from S-adenosyl-L-methionine: step 1/1. Its function is as follows. Catalyzes the decarboxylation of S-adenosylmethionine to S-adenosylmethioninamine (dcAdoMet), the propylamine donor required for the synthesis of the polyamines spermine and spermidine from the diamine putrescine. In Pyrobaculum neutrophilum (strain DSM 2338 / JCM 9278 / NBRC 100436 / V24Sta) (Thermoproteus neutrophilus), this protein is S-adenosylmethionine decarboxylase proenzyme.